A 1564-amino-acid polypeptide reads, in one-letter code: ATP-dependent permease PDR10 (1564 aa).

Positions 1–16 (MLQAPSSSNSGLNQGN) are enriched in polar residues. The segment at 1-37 (MLQAPSSSNSGLNQGNAAPDGPPNETQPYEGLDAAAQ) is disordered. At 1 to 587 (MLQAPSSSNS…AAIFFAILFN (587 aa)) the chain is on the cytoplasmic side. The ABC transporter 1 domain occupies 174–430 (ISRRLFHRTH…FQRMGYVCPE (257 aa)). The next 5 membrane-spanning stretches (helical) occupy residues 588–608 (AFSS…TEKH), 624–644 (TFSD…PYYF), 674–694 (RCIG…SVLL), 699–719 (MYTG…WISY), and 732–752 (INEF…GPNY). Asparagine 754 is a glycosylation site (N-linked (GlcNAc...) asparagine). Residues 839–849 (KGIVSEKKKKN) are compositionally biased toward basic residues. The interval 839–872 (KGIVSEKKKKNQPTLSTSDAEKDVEMNNNSSATD) is disordered. Residues 841–861 (IVSEKKKKNQPTLSTSDAEKD) traverse the membrane as a helical segment. Over 862–1304 (VEMNNNSSAT…IFMFTVVFNP (443 aa)) the chain is Cytoplasmic. The ABC transporter 2 domain maps to 923–1166 (FHWKNLCYDI…MINYFEAHGA (244 aa)). 959 to 966 (GASGAGKT) provides a ligand contact to ATP. The next 6 membrane-spanning stretches (helical) occupy residues 1305 to 1325 (ILQQ…ARER), 1340 to 1360 (ILVE…VYYY), 1390 to 1410 (VYIS…ENAA), 1426 to 1446 (VLAT…VSPL), 1459 to 1479 (ANAS…PSGM), and 1491 to 1511 (STGT…FCQF). Topologically, residues 1512-1564 (SSTNDYLATVSSSYSRRWMNYGIFSAYIVFDYCAAIFLYWLVRVPKKSKKLKK) are cytoplasmic.

It belongs to the ABC transporter superfamily. ABCG family. PDR (TC 3.A.1.205) subfamily.

Its subcellular location is the membrane. This Saccharomyces cerevisiae (strain ATCC 204508 / S288c) (Baker's yeast) protein is ATP-dependent permease PDR10 (PDR10).